A 389-amino-acid polypeptide reads, in one-letter code: Chorismate synthase (389 aa).

NADP(+) is bound by residues Arg40 and Arg46. FMN is bound by residues 131-133 (RSS), 252-253 (NA), Gly297, 312-316 (KPIPT), and Arg338.

The protein belongs to the chorismate synthase family. In terms of assembly, homotetramer. FMNH2 is required as a cofactor.

It catalyses the reaction 5-O-(1-carboxyvinyl)-3-phosphoshikimate = chorismate + phosphate. Its pathway is metabolic intermediate biosynthesis; chorismate biosynthesis; chorismate from D-erythrose 4-phosphate and phosphoenolpyruvate: step 7/7. Catalyzes the anti-1,4-elimination of the C-3 phosphate and the C-6 proR hydrogen from 5-enolpyruvylshikimate-3-phosphate (EPSP) to yield chorismate, which is the branch point compound that serves as the starting substrate for the three terminal pathways of aromatic amino acid biosynthesis. This reaction introduces a second double bond into the aromatic ring system. The sequence is that of Chorismate synthase from Lactiplantibacillus plantarum (strain ATCC BAA-793 / NCIMB 8826 / WCFS1) (Lactobacillus plantarum).